The chain runs to 61 residues: Small ribosomal subunit protein uS14 (61 aa).

Residues Cys-24, Cys-27, Cys-40, and Cys-43 each coordinate Zn(2+).

It belongs to the universal ribosomal protein uS14 family. Zinc-binding uS14 subfamily. As to quaternary structure, part of the 30S ribosomal subunit. Contacts proteins S3 and S10. Zn(2+) serves as cofactor.

Its function is as follows. Binds 16S rRNA, required for the assembly of 30S particles and may also be responsible for determining the conformation of the 16S rRNA at the A site. The sequence is that of Small ribosomal subunit protein uS14 from Staphylococcus aureus (strain USA300 / TCH1516).